The following is a 361-amino-acid chain: Glyceraldehyde-3-phosphate dehydrogenase, glycosomal (361 aa).

Residues 13–14, Asp-39, and Arg-93 contribute to the NAD(+) site; that span reads RI. D-glyceraldehyde 3-phosphate contacts are provided by residues 166–168, Thr-198, 227–228, and Arg-250; these read SCT and TG. Cys-167 serves as the catalytic Nucleophile. Position 336 (Asn-336) interacts with NAD(+). The short motif at 359–361 is the Microbody targeting signal element; that stretch reads SKL.

The protein belongs to the glyceraldehyde-3-phosphate dehydrogenase family. Homotetramer.

Its subcellular location is the glycosome. The enzyme catalyses D-glyceraldehyde 3-phosphate + phosphate + NAD(+) = (2R)-3-phospho-glyceroyl phosphate + NADH + H(+). The protein operates within carbohydrate degradation; glycolysis; pyruvate from D-glyceraldehyde 3-phosphate: step 1/5. In Crithidia fasciculata, this protein is Glyceraldehyde-3-phosphate dehydrogenase, glycosomal (GAPDG).